Consider the following 236-residue polypeptide: tRNA (guanine-N(7)-)-methyltransferase (236 aa).

Residues Asp-35, Glu-60, Asn-87, and Asp-113 each coordinate S-adenosyl-L-methionine. Residue Asp-113 is part of the active site. Substrate-binding residues include Lys-117 and Asp-149.

It belongs to the class I-like SAM-binding methyltransferase superfamily. TrmB family.

The enzyme catalyses guanosine(46) in tRNA + S-adenosyl-L-methionine = N(7)-methylguanosine(46) in tRNA + S-adenosyl-L-homocysteine. It functions in the pathway tRNA modification; N(7)-methylguanine-tRNA biosynthesis. Its function is as follows. Catalyzes the formation of N(7)-methylguanine at position 46 (m7G46) in tRNA. In Parasynechococcus marenigrum (strain WH8102), this protein is tRNA (guanine-N(7)-)-methyltransferase.